The following is a 192-amino-acid chain: Adenylate kinase (192 aa).

12 to 17 (GSGKTT) provides a ligand contact to ATP. The interval 33 to 62 (STGDLLRAEVAKDSELGKKIDKIISGGNLV) is NMP. Residues threonine 34, arginine 39, 60–62 (NLV), 87–90 (GYPR), and glutamine 94 each bind AMP. The segment at 129 to 135 (GRARGAD) is LID. Arginine 130 is an ATP binding site. AMP contacts are provided by arginine 132 and arginine 144. Arginine 172 contacts ATP.

The protein belongs to the adenylate kinase family. In terms of assembly, monomer.

The protein resides in the cytoplasm. It carries out the reaction AMP + ATP = 2 ADP. Its pathway is purine metabolism; AMP biosynthesis via salvage pathway; AMP from ADP: step 1/1. In terms of biological role, catalyzes the reversible transfer of the terminal phosphate group between ATP and AMP. Plays an important role in cellular energy homeostasis and in adenine nucleotide metabolism. This chain is Adenylate kinase, found in Campylobacter hominis (strain ATCC BAA-381 / DSM 21671 / CCUG 45161 / LMG 19568 / NCTC 13146 / CH001A).